The chain runs to 242 residues: tRNA (guanine-N(7)-)-methyltransferase (242 aa).

E66, E91, D118, and D141 together coordinate S-adenosyl-L-methionine. The active site involves D141. Substrate contacts are provided by residues K145, D177, and T214 to E217.

Belongs to the class I-like SAM-binding methyltransferase superfamily. TrmB family. Monomer.

The enzyme catalyses guanosine(46) in tRNA + S-adenosyl-L-methionine = N(7)-methylguanosine(46) in tRNA + S-adenosyl-L-homocysteine. The protein operates within tRNA modification; N(7)-methylguanine-tRNA biosynthesis. Its function is as follows. Catalyzes the formation of N(7)-methylguanine at position 46 (m7G46) in tRNA. The sequence is that of tRNA (guanine-N(7)-)-methyltransferase from Buchnera aphidicola subsp. Baizongia pistaciae (strain Bp).